A 716-amino-acid polypeptide reads, in one-letter code: Probable calcium-binding mitochondrial carrier K02F3.2 (716 aa).

The segment at 1-345 (MSFDHLLTSS…CLKDIQAIDP (345 aa)) is N-terminal domain. 4 EF-hand domains span residues 93-121 (YNKETVRLLASAADTTKDGDISFEEFCAF), 127-162 (SPDALYLTAFELFDRNASDTISCDEFEAVIRHTQPL), 165-195 (QDFDFSSEFIKRYFGADKQRNVNYHSFCQLL), and 198-233 (FYEEQGIQAFKRYDKNGNGTISSLDFQQIMTTVKGH). Aspartate 106, threonine 108, aspartate 110, glutamate 117, aspartate 140, asparagine 142, serine 144, threonine 146, and glutamate 151 together coordinate Ca(2+). Positions 211, 213, 215, 217, and 222 each coordinate Ca(2+). A linker loop domain region spans residues 346 to 362 (ERLKRVSQMDRLINIKA). A carrier domain region spans residues 372-664 (GTAFLESAYR…RLFYVDFAGS (293 aa)). Solcar repeat units lie at residues 376-468 (LESA…MRDK), 475-560 (IPLY…AKLA), and 568-656 (NSPG…LQRL). The next 6 helical transmembrane spans lie at 382-399 (FLLGSVAGACGATAVYPI), 443-462 (GLLPQIVGVAPEKAIKLTMN), 485-498 (GTGGMCQVVFTNPL), 535-554 (GSRACFLRDIPFSAIYFPAY), 574-591 (FASAFIAGVPAAGLVTPA), and 631-650 (GTAARVCRSSPQFAVTLLTY). The segment at 665–716 (RPTGSELATTKTIQDESSTNPDHVGGYKLAAATFSGIEHKFGLFLPKFETSK) is C-terminal domain.

It belongs to the mitochondrial carrier (TC 2.A.29) family. In terms of assembly, homodimer (via N-terminus).

It is found in the mitochondrion inner membrane. In terms of biological role, mitochondrial and calcium-binding carrier that catalyzes the calcium-dependent exchange of cytoplasmic glutamate with mitochondrial aspartate across the mitochondrial inner membrane. This chain is Probable calcium-binding mitochondrial carrier K02F3.2, found in Caenorhabditis elegans.